The following is a 129-amino-acid chain: Fluoride-specific ion channel FluC (129 aa).

4 consecutive transmembrane segments (helical) span residues 8-28 (ILLVGVGGFLGSVARYLVALW), 34-54 (AVFPFATLTVNLLGSFLIGFI), 70-90 (IFLVTGFCGGFTTFSSYMIEH), and 102-122 (AALYLFGSLIGGFIALYLGII). Na(+) contacts are provided by Gly78 and Thr81.

The protein belongs to the fluoride channel Fluc/FEX (TC 1.A.43) family.

Its subcellular location is the cell inner membrane. The catalysed reaction is fluoride(in) = fluoride(out). Na(+) is not transported, but it plays an essential structural role and its presence is essential for fluoride channel function. Its function is as follows. Fluoride-specific ion channel. Important for reducing fluoride concentration in the cell, thus reducing its toxicity. This chain is Fluoride-specific ion channel FluC, found in Chlorobium chlorochromatii (strain CaD3).